The sequence spans 313 residues: Protoheme IX farnesyltransferase (313 aa).

8 helical membrane passes run 34–54 (VIEL…RGTV), 56–76 (PLLI…ANTL), 105–125 (HALI…WSTT), 128–148 (LSAH…TLLL), 152–172 (TSQN…IGWS), 173–193 (AVTG…FFWT), 237–257 (VLAT…VAIL), and 291–311 (YLAV…PTLL).

Belongs to the UbiA prenyltransferase family. Protoheme IX farnesyltransferase subfamily.

It is found in the cell membrane. It carries out the reaction heme b + (2E,6E)-farnesyl diphosphate + H2O = Fe(II)-heme o + diphosphate. The protein operates within porphyrin-containing compound metabolism; heme O biosynthesis; heme O from protoheme: step 1/1. In terms of biological role, converts heme B (protoheme IX) to heme O by substitution of the vinyl group on carbon 2 of heme B porphyrin ring with a hydroxyethyl farnesyl side group. In Mycolicibacterium gilvum (strain PYR-GCK) (Mycobacterium gilvum (strain PYR-GCK)), this protein is Protoheme IX farnesyltransferase.